The following is a 273-amino-acid chain: ComE operon protein 4 (273 aa).

Belongs to the pyrroline-5-carboxylate reductase family.

In terms of biological role, dispensable for transformability. Not known if it can act as a pyrroline-5-carboxylate reductase. This Bacillus subtilis (strain 168) protein is ComE operon protein 4 (comER).